The chain runs to 110 residues: Non-specific lipid-transfer protein 4 (110 aa).

Positions 1–17 (CVVLVMCMVVIAPMAEG) are cleaved as a signal peptide. Disulfide bonds link C21–C68, C31–C45, C46–C91, and C66–C105.

Belongs to the plant LTP family.

In terms of biological role, plant non-specific lipid-transfer proteins transfer phospholipids as well as galactolipids across membranes. May play a role in wax or cutin deposition in the cell walls of expanding epidermal cells and certain secretory tissues. In Lens culinaris (Lentil), this protein is Non-specific lipid-transfer protein 4.